Reading from the N-terminus, the 274-residue chain is Secreted RxLR effector protein 144 (274 aa).

The signal sequence occupies residues 1–20 (MRPWLLLLVGLSSFFALSTS). The short motif at 49 to 72 (RKLRAFGGDTNTLKDSGKARREEK) is the RxLR-dEER element.

This sequence belongs to the RxLR effector family.

Its subcellular location is the secreted. It localises to the host nucleus. The protein localises to the host cytoplasm. Its function is as follows. Secreted effector that completely suppresses the host cell death induced by cell death-inducing proteins. This chain is Secreted RxLR effector protein 144, found in Plasmopara viticola (Downy mildew of grapevine).